Consider the following 337-residue polypeptide: Putative carboxypeptidase TP_0688 (337 aa).

Serine 118 (nucleophile) is an active-site residue. Residues glutamate 234 and histidine 302 each act as charge relay system in the active site.

It belongs to the peptidase S66 family.

This Treponema pallidum (strain Nichols) protein is Putative carboxypeptidase TP_0688.